Here is a 140-residue protein sequence, read N- to C-terminus: Small ribosomal subunit protein uS19 (140 aa).

Belongs to the universal ribosomal protein uS19 family.

Its function is as follows. Protein S19 forms a complex with S13 that binds strongly to the 16S ribosomal RNA. The protein is Small ribosomal subunit protein uS19 of Natronomonas pharaonis (strain ATCC 35678 / DSM 2160 / CIP 103997 / JCM 8858 / NBRC 14720 / NCIMB 2260 / Gabara) (Halobacterium pharaonis).